We begin with the raw amino-acid sequence, 944 residues long: Isoleucine--tRNA ligase (944 aa).

The 'HIGH' region signature appears at Pro58–His68. Glu568 lines the L-isoleucyl-5'-AMP pocket. Positions Lys609–Ser613 match the 'KMSKS' region motif. Lys612 contributes to the ATP binding site. Residues Cys907, Cys910, Cys927, and Cys930 each contribute to the Zn(2+) site.

Belongs to the class-I aminoacyl-tRNA synthetase family. IleS type 1 subfamily. In terms of assembly, monomer. The cofactor is Zn(2+).

It is found in the cytoplasm. It catalyses the reaction tRNA(Ile) + L-isoleucine + ATP = L-isoleucyl-tRNA(Ile) + AMP + diphosphate. In terms of biological role, catalyzes the attachment of isoleucine to tRNA(Ile). As IleRS can inadvertently accommodate and process structurally similar amino acids such as valine, to avoid such errors it has two additional distinct tRNA(Ile)-dependent editing activities. One activity is designated as 'pretransfer' editing and involves the hydrolysis of activated Val-AMP. The other activity is designated 'posttransfer' editing and involves deacylation of mischarged Val-tRNA(Ile). The polypeptide is Isoleucine--tRNA ligase (Psychromonas ingrahamii (strain DSM 17664 / CCUG 51855 / 37)).